Reading from the N-terminus, the 794-residue chain is Cadherin-12 (794 aa).

An N-terminal signal peptide occupies residues 1–23 (MLTRNCLSLLLWVLFDGGLLTPL). The propeptide occupies 24–54 (QPQPQQTLATEPRENVIHLPGQRSHFQRVKR). Cadherin domains follow at residues 55-160 (GWVW…EPKF), 161-269 (LDGP…PPRF), 270-384 (PKSI…PPVF), 385-487 (SKPL…EFPP), and 488-609 (EISV…IFLP). Residues 55–609 (GWVWNQFFVL…SCNVEAIFLP (555 aa)) lie on the Extracellular side of the membrane. N256 carries an N-linked (GlcNAc...) asparagine glycan. N-linked (GlcNAc...) asparagine glycans are attached at residues N456, N537, and N545. Residues 610–637 (VGLSTGALIAILLCIVILLAIVVLYVAL) form a helical membrane-spanning segment. The Cytoplasmic portion of the chain corresponds to 638-794 (RRQKKKDTLM…EESYNPDKVT (157 aa)). A Phosphoserine modification is found at S787.

As to expression, brain.

It is found in the cell membrane. Its function is as follows. Cadherins are calcium-dependent cell adhesion proteins. They preferentially interact with themselves in a homophilic manner in connecting cells; cadherins may thus contribute to the sorting of heterogeneous cell types. The polypeptide is Cadherin-12 (CDH12) (Homo sapiens (Human)).